A 401-amino-acid polypeptide reads, in one-letter code: MEQVYSVTQVNNYIKNMFVKDYVLNRIYMKGEVSNCKYHTSGHIYFTLKDETGQMACVLFAGYRTGLPFRLEEGQSVIVLGSISVYERDGKYQLYAKEIKLDGLGLLYERFELLKRKLNEEGLFDPSHKKTLVPYPRTVGIVTASTGAAIQDIINISKRRNPYVQLVLYPAKVQGEGAAKTIVAGIKALEAKGVDTIIVGRGGGSIEDLWAFNEEMVARAIFDCSIPIISAVGHETDITISDFVSDLRAPTPSAAAELAVPEIESLLSNLVDYHYSLVQCVMRKITMARSELEKKQLQLTHLSPVYALRQKRQYTIDLENKLRQRMNELIRYKRHLLDIQIERLKAASPLDKLKSGFSYVSDSSGKVVNSITKTKPGDELTIAVTDGMIKAKTIGVESIER.

Belongs to the XseA family. As to quaternary structure, heterooligomer composed of large and small subunits.

The protein resides in the cytoplasm. The enzyme catalyses Exonucleolytic cleavage in either 5'- to 3'- or 3'- to 5'-direction to yield nucleoside 5'-phosphates.. Bidirectionally degrades single-stranded DNA into large acid-insoluble oligonucleotides, which are then degraded further into small acid-soluble oligonucleotides. In Lachnoclostridium phytofermentans (strain ATCC 700394 / DSM 18823 / ISDg) (Clostridium phytofermentans), this protein is Exodeoxyribonuclease 7 large subunit.